The sequence spans 322 residues: Sideroflexin-1 (322 aa).

The residue at position 2 (serine 2) is an N-acetylserine. The Mitochondrial matrix segment spans residues 2 to 102; the sequence is SGEVPPNINI…MSAQVPMNMT (101 aa). Residues 103–120 form a helical membrane-spanning segment; it reads ITGCMMTFYRTTPAVLFW. The Mitochondrial intermembrane portion of the chain corresponds to 121–146; sequence QWINQSFNAVVNYTNRSGDAPLTVNE. A helical membrane pass occupies residues 147–167; it reads LGTAYVSATTGAVATALGLNA. The Mitochondrial matrix segment spans residues 168-174; sequence LTKRVSP. Residues 175 to 195 form a helical membrane-spanning segment; it reads LIGRFVPFAAVAAANCINIPL. The Mitochondrial intermembrane portion of the chain corresponds to 196 to 228; it reads MRQRELKVGIPVTDENGTRLGESTNAAKQAITQ. Residues 229–249 traverse the membrane as a helical segment; sequence VVISRILMAAPGMAIPPFIMN. Residues 250 to 266 are Mitochondrial matrix-facing; sequence TLEKKAFLKRFPWMSAP. The helical transmembrane segment at 267–287 threads the bilayer; sequence IQVTLVGFCLVFATPLCCALF. Topologically, residues 288 to 322 are mitochondrial intermembrane; sequence PQKSSMSVTSLEDELQASIQRTHPEIRRVYFNKGL.

This sequence belongs to the sideroflexin family. Widely expressed, with highest expression in kidney and liver.

It is found in the mitochondrion inner membrane. The enzyme catalyses L-serine(in) = L-serine(out). It carries out the reaction L-alanine(in) = L-alanine(out). It catalyses the reaction L-cysteine(in) = L-cysteine(out). Its function is as follows. Amino acid transporter importing serine, an essential substrate of the mitochondrial branch of the one-carbon pathway, into mitochondria. Mitochondrial serine is then converted to glycine and formate, which exits to the cytosol where it is used to generate the charged folates that serve as one-carbon donors. May also transport other amino acids including alanine and cysteine. The chain is Sideroflexin-1 from Mus musculus (Mouse).